Here is a 464-residue protein sequence, read N- to C-terminus: Glucose-6-phosphate isomerase (464 aa).

Residue glutamate 290 is the Proton donor of the active site. Active-site residues include histidine 319 and lysine 433.

The protein belongs to the GPI family.

The protein localises to the cytoplasm. It catalyses the reaction alpha-D-glucose 6-phosphate = beta-D-fructose 6-phosphate. It functions in the pathway carbohydrate biosynthesis; gluconeogenesis. The protein operates within carbohydrate degradation; glycolysis; D-glyceraldehyde 3-phosphate and glycerone phosphate from D-glucose: step 2/4. Catalyzes the reversible isomerization of glucose-6-phosphate to fructose-6-phosphate. In Carboxydothermus hydrogenoformans (strain ATCC BAA-161 / DSM 6008 / Z-2901), this protein is Glucose-6-phosphate isomerase.